We begin with the raw amino-acid sequence, 195 residues long: Glutathione S-transferase class-mu 26 kDa isozyme (195 aa).

Residues 1-83 (MAPKLGYWKI…YIADKHNMLG (83 aa)) form the GST N-terminal domain. Glutathione-binding positions include 7–8 (YW), 41–45 (WRNEK), 54–55 (NL), and 67–68 (QS). The GST C-terminal domain maps to 85–195 (CPKERAEISM…TFGGGDAPPK (111 aa)). Tyr111 provides a ligand contact to substrate.

It belongs to the GST superfamily. Mu family. In terms of assembly, homodimer.

It carries out the reaction RX + glutathione = an S-substituted glutathione + a halide anion + H(+). Conjugation of reduced glutathione to a wide number of exogenous and endogenous hydrophobic electrophiles. In terms of biological role, GST isoenzymes appear to play a central role in the parasite detoxification system. Other functions are also suspected including a role in increasing the solubility of haematin in the parasite gut. The protein is Glutathione S-transferase class-mu 26 kDa isozyme of Schistosoma mansoni (Blood fluke).